Reading from the N-terminus, the 312-residue chain is DNA-directed RNA polymerase subunit alpha (312 aa).

Residues 1 to 226 (MIEFEKPTIT…EHLGLFTDLT (226 aa)) form an alpha N-terminal domain (alpha-NTD) region. The tract at residues 242 to 312 (SDDRMLDRTI…DLGLGLKKDK (71 aa)) is alpha C-terminal domain (alpha-CTD).

It belongs to the RNA polymerase alpha chain family. Homodimer. The RNAP catalytic core consists of 2 alpha, 1 beta, 1 beta' and 1 omega subunit. When a sigma factor is associated with the core the holoenzyme is formed, which can initiate transcription.

It catalyses the reaction RNA(n) + a ribonucleoside 5'-triphosphate = RNA(n+1) + diphosphate. Its function is as follows. DNA-dependent RNA polymerase catalyzes the transcription of DNA into RNA using the four ribonucleoside triphosphates as substrates. The polypeptide is DNA-directed RNA polymerase subunit alpha (Streptococcus suis (strain 98HAH33)).